The primary structure comprises 1160 residues: GPI inositol-deacylase (1160 aa).

A disordered region spans residues 1–92 (MHRRSSGSPV…DPRSSSAAMP (92 aa)). A compositionally biased stretch (polar residues) spans 57-92 (GASTPRSRNSSTWRMPSSATTTLLPPDPRSSSAAMP). N-linked (GlcNAc...) asparagine glycosylation is present at N65. A helical transmembrane segment spans residues 120–140 (PCSILTALTSLLASLFLCAIL). S307 is an active-site residue. 2 helical membrane passes run 786–806 (LVMRYRTVFAAFPILVVALVL) and 832–852 (SSLPMLLLAMSLLASSLATSS). A glycan (N-linked (GlcNAc...) asparagine) is linked at N866. The next 2 membrane-spanning stretches (helical) occupy residues 886-906 (AFFWFLVPLFGLICVGVCVIL) and 973-993 (ILLLLVSTTIPYQFAYLVACI). A glycan (N-linked (GlcNAc...) asparagine) is linked at N1019. Helical transmembrane passes span 1023–1043 (SIFILMLWILPINILVLLVWA), 1060–1080 (VLSIMPFILLVEAMTTGTMIP), 1092–1112 (LILFSIAIYAAVYGVSYAYLL), and 1115–1135 (LANIFAAWLVGVYFFSSGFSV).

This sequence belongs to the GPI inositol-deacylase family.

It is found in the endoplasmic reticulum membrane. In terms of biological role, involved in inositol deacylation of GPI-anchored proteins which plays important roles in the quality control and ER-associated degradation of GPI-anchored proteins. This chain is GPI inositol-deacylase (bst1), found in Aspergillus terreus (strain NIH 2624 / FGSC A1156).